The primary structure comprises 348 residues: Histidinol-phosphate aminotransferase (348 aa).

Position 211 is an N6-(pyridoxal phosphate)lysine (Lys211).

It belongs to the class-II pyridoxal-phosphate-dependent aminotransferase family. Histidinol-phosphate aminotransferase subfamily. Homodimer. The cofactor is pyridoxal 5'-phosphate.

The enzyme catalyses L-histidinol phosphate + 2-oxoglutarate = 3-(imidazol-4-yl)-2-oxopropyl phosphate + L-glutamate. Its pathway is amino-acid biosynthesis; L-histidine biosynthesis; L-histidine from 5-phospho-alpha-D-ribose 1-diphosphate: step 7/9. In Pseudomonas entomophila (strain L48), this protein is Histidinol-phosphate aminotransferase.